The following is a 470-amino-acid chain: tRNA(Ile)-lysidine synthase (470 aa).

32–37 (SGGVDS) serves as a coordination point for ATP.

Belongs to the tRNA(Ile)-lysidine synthase family.

The protein localises to the cytoplasm. The enzyme catalyses cytidine(34) in tRNA(Ile2) + L-lysine + ATP = lysidine(34) in tRNA(Ile2) + AMP + diphosphate + H(+). Ligates lysine onto the cytidine present at position 34 of the AUA codon-specific tRNA(Ile) that contains the anticodon CAU, in an ATP-dependent manner. Cytidine is converted to lysidine, thus changing the amino acid specificity of the tRNA from methionine to isoleucine. This Shewanella woodyi (strain ATCC 51908 / MS32) protein is tRNA(Ile)-lysidine synthase.